Reading from the N-terminus, the 368-residue chain is 3-dehydroquinate synthase (368 aa).

Residues 71 to 76 (DGEAFK), 105 to 109 (GVVGD), 129 to 130 (TT), Lys-142, Lys-151, and 169 to 172 (TLRT) contribute to the NAD(+) site. Positions 184, 247, and 264 each coordinate Zn(2+).

Belongs to the sugar phosphate cyclases superfamily. Dehydroquinate synthase family. Requires Co(2+) as cofactor. Zn(2+) is required as a cofactor. NAD(+) serves as cofactor.

Its subcellular location is the cytoplasm. It catalyses the reaction 7-phospho-2-dehydro-3-deoxy-D-arabino-heptonate = 3-dehydroquinate + phosphate. It functions in the pathway metabolic intermediate biosynthesis; chorismate biosynthesis; chorismate from D-erythrose 4-phosphate and phosphoenolpyruvate: step 2/7. Functionally, catalyzes the conversion of 3-deoxy-D-arabino-heptulosonate 7-phosphate (DAHP) to dehydroquinate (DHQ). This Cupriavidus taiwanensis (strain DSM 17343 / BCRC 17206 / CCUG 44338 / CIP 107171 / LMG 19424 / R1) (Ralstonia taiwanensis (strain LMG 19424)) protein is 3-dehydroquinate synthase.